Reading from the N-terminus, the 380-residue chain is MAPNLRKSHPLLKMINNSLIDLPTPSNISAWWNFGSLLGICLLTQILTGLLLAMHYTADTTLAFSSVAHTCRNVQYGWLIRNLHANGASFFFICIYLHIGRGFYYGSYLYKETWNTGVILLLTLMATAFVGYVLPWGQMSFWGATVITNLFSAIPYIGQTLVEWAWGGFSVDNPTLTRFFALHFLLPFMITGLTTIHLTFLHESGSNNPLGITSNCDKIPFHPYFTLKDFLGFTLMLLPLTTLALFSPNLLGDPENFTPANPLITPPHIKPEWYFLFAYAILRSIPNKLGGVLALAASVLILFLAPFLHKAKQRTMTFRPISQLLFWILVTNLLILTWVGSQPVEHPFIIIGQLASITYFTILLILFPIIGALENKMLNY.

Helical transmembrane passes span 34–54 (FGSL…LLAM), 78–99 (WLIR…YLHI), 114–134 (WNTG…GYVL), and 179–199 (FFAL…IHLT). Residues His-84 and His-98 each coordinate heme b. Positions 183 and 197 each coordinate heme b. An a ubiquinone-binding site is contributed by His-202. 4 consecutive transmembrane segments (helical) span residues 227-247 (LKDF…ALFS), 289-309 (LGGV…PFLH), 321-341 (ISQL…WVGS), and 348-368 (FIII…ILFP).

Belongs to the cytochrome b family. In terms of assembly, the cytochrome bc1 complex contains 11 subunits: 3 respiratory subunits (MT-CYB, CYC1 and UQCRFS1), 2 core proteins (UQCRC1 and UQCRC2) and 6 low-molecular weight proteins (UQCRH/QCR6, UQCRB/QCR7, UQCRQ/QCR8, UQCR10/QCR9, UQCR11/QCR10 and a cleavage product of UQCRFS1). This cytochrome bc1 complex then forms a dimer. It depends on heme b as a cofactor.

The protein resides in the mitochondrion inner membrane. Functionally, component of the ubiquinol-cytochrome c reductase complex (complex III or cytochrome b-c1 complex) that is part of the mitochondrial respiratory chain. The b-c1 complex mediates electron transfer from ubiquinol to cytochrome c. Contributes to the generation of a proton gradient across the mitochondrial membrane that is then used for ATP synthesis. The chain is Cytochrome b (MT-CYB) from Pelecanoides urinatrix (Common diving petrel).